The chain runs to 366 residues: Histidinol-phosphate aminotransferase 2 (366 aa).

An N6-(pyridoxal phosphate)lysine modification is found at K226.

This sequence belongs to the class-II pyridoxal-phosphate-dependent aminotransferase family. Histidinol-phosphate aminotransferase subfamily. Homodimer. Requires pyridoxal 5'-phosphate as cofactor.

The catalysed reaction is L-histidinol phosphate + 2-oxoglutarate = 3-(imidazol-4-yl)-2-oxopropyl phosphate + L-glutamate. Its pathway is amino-acid biosynthesis; L-histidine biosynthesis; L-histidine from 5-phospho-alpha-D-ribose 1-diphosphate: step 7/9. In Cupriavidus pinatubonensis (strain JMP 134 / LMG 1197) (Cupriavidus necator (strain JMP 134)), this protein is Histidinol-phosphate aminotransferase 2.